The sequence spans 401 residues: Argininosuccinate synthase (401 aa).

ATP is bound by residues 7 to 15 (AYSGGLDTS) and Ala-34. L-citrulline contacts are provided by Tyr-85 and Ser-90. Gly-115 is a binding site for ATP. L-aspartate contacts are provided by Thr-117, Asn-121, and Asp-122. Position 121 (Asn-121) interacts with L-citrulline. L-citrulline-binding residues include Arg-125, Ser-174, Ser-183, Glu-259, and Tyr-271.

It belongs to the argininosuccinate synthase family. Type 1 subfamily. In terms of assembly, homotetramer.

It is found in the cytoplasm. It carries out the reaction L-citrulline + L-aspartate + ATP = 2-(N(omega)-L-arginino)succinate + AMP + diphosphate + H(+). It participates in amino-acid biosynthesis; L-arginine biosynthesis; L-arginine from L-ornithine and carbamoyl phosphate: step 2/3. This is Argininosuccinate synthase from Pelotomaculum thermopropionicum (strain DSM 13744 / JCM 10971 / SI).